We begin with the raw amino-acid sequence, 811 residues long: Methionine--tRNA ligase (811 aa).

Residues 11-21 carry the 'HIGH' region motif; it reads PYVNNVPHLGN. Zn(2+) is bound by residues Cys-142, Cys-145, Cys-155, and Cys-158. The 'KMSKS' region signature appears at 344-348; that stretch reads KFSKS. Lys-347 contacts ATP. The segment at 606–640 is disordered; that stretch reads GVSVPRTAQMPTGMNKKETDAQQKKEEREMPPPSD. A compositionally biased stretch (basic and acidic residues) spans 620–635; the sequence is NKKETDAQQKKEEREM. In terms of domain architecture, tRNA-binding spans 648-753; it reads FSERVVLKVA…PWALPGERAT (106 aa).

It belongs to the class-I aminoacyl-tRNA synthetase family. MetG type 1 subfamily. Homodimer. It depends on Zn(2+) as a cofactor.

It localises to the cytoplasm. The enzyme catalyses tRNA(Met) + L-methionine + ATP = L-methionyl-tRNA(Met) + AMP + diphosphate. In terms of biological role, is required not only for elongation of protein synthesis but also for the initiation of all mRNA translation through initiator tRNA(fMet) aminoacylation. The sequence is that of Methionine--tRNA ligase from Treponema pallidum (strain Nichols).